The primary structure comprises 367 residues: Phosphoribosylaminoimidazole-succinocarboxamide synthase (367 aa).

It belongs to the SAICAR synthetase family.

The enzyme catalyses 5-amino-1-(5-phospho-D-ribosyl)imidazole-4-carboxylate + L-aspartate + ATP = (2S)-2-[5-amino-1-(5-phospho-beta-D-ribosyl)imidazole-4-carboxamido]succinate + ADP + phosphate + 2 H(+). The protein operates within purine metabolism; IMP biosynthesis via de novo pathway; 5-amino-1-(5-phospho-D-ribosyl)imidazole-4-carboxamide from 5-amino-1-(5-phospho-D-ribosyl)imidazole-4-carboxylate: step 1/2. This Shewanella frigidimarina (strain NCIMB 400) protein is Phosphoribosylaminoimidazole-succinocarboxamide synthase.